The following is a 2052-amino-acid chain: Genome polyprotein (2052 aa).

2 short sequence motifs ((L)YPX(n)L motif) span residues 167-171 (YPHGL) and 200-205 (YPVWEL). The segment at 502 to 522 (TVSTEQNVPDPQVGIKGKANR) is disordered. The involved in P1-2A pentamerization stretch occupies residues 760–830 (MMSRIAAGDL…PRKMKGLFSQ (71 aa)). Residues 1005–1025 (TVEIINIVLCFIKSGILLYVI) traverse the membrane as a helical segment. The interval 1037-1064 (IGLLRVMNYADIGCSVISCGKVFSKMLE) is membrane-penetrating ability. Positions 1121-1146 (KKKDVLNILKDNQQKIEKAIEEADNF) form a coiled coil. Residues 1296–1316 (WVAVGAAVGILGLLVGGWFVY) traverse the membrane as a helical segment. Tyr-1333 carries the O-(5'-phospho-RNA)-tyrosine modification. In terms of domain architecture, Peptidase C3 spans 1348–1562 (DPVESQSTLE…VAKLITQEMF (215 aa)). Active-site for protease 3C activity residues include His-1397, Asp-1437, and Cys-1525. Positions 1810–1931 (DVGLDLDFSA…VFSRDVQIDN (122 aa)) constitute a RdRp catalytic domain.

Belongs to the picornaviridae polyprotein family. Homodimer. Homomultimer; probably interacts with membranes in a multimeric form. Seems to assemble into amyloid-like fibers. In terms of assembly, homodimer. Monomer. Interacts with protein 3CD. As to quaternary structure, interacts with host ACBD3. Interacts with protein 3AB. In terms of assembly, interacts with human MAVS. As to quaternary structure, homodimer; disulfide-linked. Homopentamer. Homooligomer. In terms of assembly, interacts with capsid protein VP2. Interacts with capsid protein VP3. As to quaternary structure, interacts with capsid protein VP1. Interacts with capsid protein VP3. Interacts with capsid protein VP1. Interacts with capsid protein VP2. In terms of processing, specific enzymatic cleavages by viral protease in vivo yield a variety of precursors and mature proteins. Polyprotein processing intermediates are produced, such as P1-2A which is a functional precursor of the structural proteins, VP0 which is a VP4-VP2 precursor, VP1-2A precursor, 3ABC precursor which is a stable and catalytically active precursor of 3A, 3B and 3C proteins, 3AB and 3CD precursors. The assembly signal 2A is removed from VP1-2A by a host protease, possibly host Cathepsin L. This cleavage occurs over a region of 3 amino-acids probably generating VP1 proteins with heterogeneous C-termini. During virion maturation, immature virions are rendered infectious following cleavage of VP0 into VP4 and VP2. This maturation seems to be an autocatalytic event triggered by the presence of RNA in the capsid and is followed by a conformational change of the particle. Post-translationally, the assembly signal 2A is removed from VP1-2A by a host protease, possibly host Cathepsin L in naked virions. This cleavage does not occur in enveloped virions. This cleavage occurs over a region of 3 amino-acids probably generating VP1 proteins with heterogeneous C-termini. In terms of processing, VPg is uridylylated prior to priming replication into VPg-pUpU. Unlike other picornaviruses, does not seem to be myristoylated.

Its subcellular location is the virion. The protein localises to the host endosome. The protein resides in the host multivesicular body. It is found in the host membrane. It localises to the host mitochondrion outer membrane. Its subcellular location is the host cytoplasm. The protein localises to the host cytoplasmic vesicle membrane. It carries out the reaction RNA(n) + a ribonucleoside 5'-triphosphate = RNA(n+1) + diphosphate. The enzyme catalyses a ribonucleoside 5'-triphosphate + H2O = a ribonucleoside 5'-diphosphate + phosphate + H(+). It catalyses the reaction Selective cleavage of Gln-|-Gly bond in the poliovirus polyprotein. In other picornavirus reactions Glu may be substituted for Gln, and Ser or Thr for Gly.. Its function is as follows. Capsid proteins VP1, VP2, and VP3 form a closed capsid enclosing the viral positive strand RNA genome. All these proteins contain a beta-sheet structure called beta-barrel jelly roll. Together they form an icosahedral capsid (T=3) composed of 60 copies of each VP1, VP2, and VP3, with a diameter of approximately 300 Angstroms. VP1 is situated at the 12 fivefold axes, whereas VP2 and VP3 are located at the quasi-sixfold axes. The naked capsid interacts with the host receptor HAVCR1 to provide virion attachment to and probably entry into the target cell. VP0 precursor is a component of the immature procapsids. Functionally, plays a role in the assembly of the 12 pentamers into an icosahedral structure. Has not been detected in mature virions, supposedly owing to its small size. In terms of biological role, precursor component of immature procapsids that corresponds to an extended form of the structural protein VP1. After maturation, possibly by the host Cathepsin L, the assembly signal 2A is cleaved to give rise to the mature VP1 protein. Its function is as follows. Functions as a viroporin. Affects membrane integrity and causes an increase in membrane permeability. Involved in host intracellular membrane rearrangements probably to give rise to the viral factories. Does not disrupt calcium homeostasis or glycoprotein trafficking. Antagonizes the innate immune response of the host by suppressing IFN-beta synthesis, which it achieves by interfering with the RIG-I/IFIH1 pathway. Affects membrane integrity and causes an increase in membrane permeability. Functionally, associates with and induces structural rearrangements of intracellular membranes. Displays RNA-binding activity. In terms of biological role, the precursor 3ABC is targeted to the mitochondrial membrane where protease 3C activity cleaves and inhibits the host antiviral protein MAVS, thereby disrupting activation of IRF3 through the IFIH1/MDA5 pathway. In vivo, the protease activity of 3ABC precursor is more efficient in cleaving the 2BC precursor than that of protein 3C. The 3ABC precursor may therefore play a role in the proteolytic processing of the polyprotein. Possible viroporin. Its function is as follows. Interacts with the 3CD precursor and with RNA structures found at both the 5'- and 3'-termini of the viral genome. Since the 3AB precursor contains the hydrophobic domain 3A, it probably anchors the whole viral replicase complex to intracellular membranes on which viral RNA synthesis occurs. May serve as membrane anchor to the 3AB and 3ABC precursors via its hydrophobic domain. May interact with RNA. Functionally, acts as a primer for viral RNA replication and remains covalently bound to viral genomic RNA. VPg is uridylylated prior to priming replication into VPg-pUpU. The VPg-pUpU is then used as primer on the genomic RNA poly(A) by the RNA-dependent RNA polymerase to replicate the viral genome. In terms of biological role, cysteine protease that generates mature viral proteins from the precursor polyprotein. In addition to its proteolytic activity, it binds to viral RNA, and thus influences viral genome replication. RNA and substrate bind cooperatively to the protease. Cleaves IKBKG/NEMO to impair innate immune signaling. Cleaves host PABPC1 which may participate in the switch of viral translation to RNA synthesis. Its function is as follows. Interacts with the 3AB precursor and with RNA structures found at both the 5'- and 3'-termini of the viral genome. Disrupts TLR3 signaling by degrading the host adapter protein TICAM1/TRIF. RNA-directed RNA polymerase 3D-POL replicates genomic and antigenomic RNA by recognizing replications specific signals. The protein is Genome polyprotein of Homo sapiens (Human).